We begin with the raw amino-acid sequence, 385 residues long: ATP phosphoribosyltransferase regulatory subunit (385 aa).

Belongs to the class-II aminoacyl-tRNA synthetase family. HisZ subfamily. In terms of assembly, heteromultimer composed of HisG and HisZ subunits.

The protein resides in the cytoplasm. The protein operates within amino-acid biosynthesis; L-histidine biosynthesis; L-histidine from 5-phospho-alpha-D-ribose 1-diphosphate: step 1/9. Its function is as follows. Required for the first step of histidine biosynthesis. May allow the feedback regulation of ATP phosphoribosyltransferase activity by histidine. The polypeptide is ATP phosphoribosyltransferase regulatory subunit (Bordetella petrii (strain ATCC BAA-461 / DSM 12804 / CCUG 43448)).